The chain runs to 1208 residues: Putative protease AXL1 (1208 aa).

A Zn(2+)-binding site is contributed by His-68. Glu-71 functions as the Proton acceptor in the catalytic mechanism. Positions 72 and 156 each coordinate Zn(2+). Residue Ser-262 is modified to Phosphoserine.

This sequence belongs to the peptidase M16 family. Interacts with BUD5. Zn(2+) serves as cofactor.

It is found in the bud neck. Its function is as follows. Probable protease. Involved in axial budding. The protein is Putative protease AXL1 (AXL1) of Saccharomyces cerevisiae (strain ATCC 204508 / S288c) (Baker's yeast).